Here is a 239-residue protein sequence, read N- to C-terminus: Orotidine 5'-phosphate decarboxylase (239 aa).

Substrate is bound by residues D15, K37, 64–73, T126, R187, Q196, G216, and R217; that span reads DLKYHDIPNT. The Proton donor role is filled by K66.

It belongs to the OMP decarboxylase family. Type 1 subfamily. In terms of assembly, homodimer.

The catalysed reaction is orotidine 5'-phosphate + H(+) = UMP + CO2. The protein operates within pyrimidine metabolism; UMP biosynthesis via de novo pathway; UMP from orotate: step 2/2. Its function is as follows. Catalyzes the decarboxylation of orotidine 5'-monophosphate (OMP) to uridine 5'-monophosphate (UMP). The protein is Orotidine 5'-phosphate decarboxylase of Geotalea daltonii (strain DSM 22248 / JCM 15807 / FRC-32) (Geobacter daltonii).